Consider the following 122-residue polypeptide: Large ribosomal subunit protein uL14 (122 aa).

The protein belongs to the universal ribosomal protein uL14 family. Part of the 50S ribosomal subunit. Forms a cluster with proteins L3 and L19. In the 70S ribosome, L14 and L19 interact and together make contacts with the 16S rRNA in bridges B5 and B8.

Functionally, binds to 23S rRNA. Forms part of two intersubunit bridges in the 70S ribosome. The protein is Large ribosomal subunit protein uL14 of Lysinibacillus sphaericus (strain C3-41).